Reading from the N-terminus, the 177-residue chain is Large ribosomal subunit protein uL6 (177 aa).

It belongs to the universal ribosomal protein uL6 family. In terms of assembly, part of the 50S ribosomal subunit.

In terms of biological role, this protein binds to the 23S rRNA, and is important in its secondary structure. It is located near the subunit interface in the base of the L7/L12 stalk, and near the tRNA binding site of the peptidyltransferase center. This is Large ribosomal subunit protein uL6 from Klebsiella pneumoniae subsp. pneumoniae (strain ATCC 700721 / MGH 78578).